The primary structure comprises 1674 residues: Kinesin-like protein KIF21A (1674 aa).

Position 1 is an N-acetylmethionine (Met1). The Kinesin motor domain occupies 9 to 371; sequence SVRVAVRIRP…LKYANRARNI (363 aa). 88–95 contacts ATP; sequence GQTGAGKT. Residues 365 to 575 adopt a coiled-coil conformation; the sequence is ANRARNIKNK…NREERSVAGK (211 aa). Ser524 carries the post-translational modification Phosphoserine. Disordered regions lie at residues 556–641, 779–804, and 841–881; these read KKRL…DEKA, EEQE…DQRK, and SDKV…AQQK. A compositionally biased stretch (basic and acidic residues) spans 560–597; sequence QKLEESNREERSVAGKEDNTDTDQEKKEEKGVSERENN. Residues 598-637 show a composition bias toward acidic residues; it reads ELEVEESQEVSDHEDEEEEEEEEEDDIDGGESSDESDSES. Residues 851–865 are compositionally biased toward polar residues; the sequence is KLSSSDAPAQDTGSS. 2 coiled-coil regions span residues 931–1019 and 1053–1083; these read TDII…AKEE and LQAA…NQLL. The interval 1116–1138 is disordered; sequence VEDSTDEDAPLNSPGSEGSTLSS. A compositionally biased stretch (polar residues) spans 1128–1138; sequence SPGSEGSTLSS. Positions 1146–1167 are interaction with KANK1 and KANK2; that stretch reads EVKPKNKARRRTTTQMELLYAD. 2 stretches are compositionally biased toward polar residues: residues 1170–1179 and 1196–1205; these read ELASDTSTGD and GMNTETSGTS. The tract at residues 1170 to 1318 is disordered; that stretch reads ELASDTSTGD…SSLSEVHRSS (149 aa). Residues Ser1212, Ser1225, Ser1229, and Ser1239 each carry the phosphoserine modification. Residues 1245–1262 show a composition bias toward basic and acidic residues; that stretch reads KAYEKAEKSKAKEQKHSD. Polar residues predominate over residues 1288–1297; the sequence is NRLTVSQGNT. WD repeat units follow at residues 1345–1382, 1385–1423, 1449–1487, 1490–1532, 1541–1578, 1582–1621, and 1624–1661; these read GHTK…EIMS, GHPN…KCIR, SGEN…STGK, GHLG…LGTV, PHYD…LLQQ, AHKD…PVGE, and GHDS…DGQI. A Phosphoserine modification is found at Ser1662. Position 1664 is a phosphothreonine (Thr1664). Ser1673 carries the phosphoserine modification.

It belongs to the TRAFAC class myosin-kinesin ATPase superfamily. Kinesin family. In terms of assembly, part of a cortical microtubule stabilization complex (CMSC) composed of KANK1, PPFIA1, PPFIBP1, ERC1/ELKS, PHLDB2/LL5beta, CLASPs, KIF21A and possibly additional interactors; within CMSCs KANK1 and PHLDB2/LL5beta seem to be the core components for recruiting microtubule-binding proteins KIF21A and CLASPs, whereas PPFIA1, PPFIBP1 and ERC1/ELKS serve as scaffolds for protein clustering. Interacts (via residues 1146-1167) with KANK1 (via ankyrin repeats 1-5) and KANK2 (via ankyrin repeats 1-5).

Its subcellular location is the cytoplasm. The protein resides in the cytoskeleton. It is found in the cell cortex. It localises to the cell projection. The protein localises to the axon. Its subcellular location is the dendrite. The protein resides in the growth cone. Its function is as follows. Processive microtubule plus-end directed motor protein involved in neuronal axon guidance. Is recruited by KANK1 to cortical microtubule stabilizing complexes (CMSCs) at focal adhesions (FAs) rims where it promotes microtubule capture and stability. Controls microtubule polymerization rate at axonal growth cones and suppresses microtubule growth without inducing microtubule disassembly once it reaches the cell cortex. This Homo sapiens (Human) protein is Kinesin-like protein KIF21A (KIF21A).